The sequence spans 429 residues: 3-oxo-tetronate kinase (429 aa).

Residues Ser268, 366 to 369 (GGET), and Gly410 contribute to the ATP site.

The protein belongs to the four-carbon acid sugar kinase family.

The catalysed reaction is 3-dehydro-L-erythronate + ATP = 3-dehydro-4-O-phospho-L-erythronate + ADP + H(+). It carries out the reaction 3-dehydro-D-erythronate + ATP = 3-dehydro-4-O-phospho-D-erythronate + ADP + H(+). Functionally, catalyzes the ATP-dependent phosphorylation of 3-oxo-tetronate to 3-oxo-tetronate 4-phosphate. This chain is 3-oxo-tetronate kinase, found in Pseudomonas savastanoi pv. phaseolicola (strain 1448A / Race 6) (Pseudomonas syringae pv. phaseolicola (strain 1448A / Race 6)).